The primary structure comprises 299 residues: Nucleotide-binding protein DIP1313 (299 aa).

22–29 (GLSGAGLS) contacts ATP. 73–76 (DVRS) is a binding site for GTP.

This sequence belongs to the RapZ-like family.

In terms of biological role, displays ATPase and GTPase activities. The chain is Nucleotide-binding protein DIP1313 from Corynebacterium diphtheriae (strain ATCC 700971 / NCTC 13129 / Biotype gravis).